Reading from the N-terminus, the 596-residue chain is NADH-quinone oxidoreductase subunit C/D (596 aa).

The NADH dehydrogenase I subunit C stretch occupies residues 1–186 (MTDLTAQDAA…DPFELTKAKQ (186 aa)). An NADH dehydrogenase I subunit D region spans residues 210–596 (DFMFLNLGPN…IDFVMSDVDR (387 aa)).

This sequence in the N-terminal section; belongs to the complex I 30 kDa subunit family. The protein in the C-terminal section; belongs to the complex I 49 kDa subunit family. As to quaternary structure, NDH-1 is composed of 13 different subunits. Subunits NuoB, CD, E, F, and G constitute the peripheral sector of the complex.

It localises to the cell inner membrane. It catalyses the reaction a quinone + NADH + 5 H(+)(in) = a quinol + NAD(+) + 4 H(+)(out). Functionally, NDH-1 shuttles electrons from NADH, via FMN and iron-sulfur (Fe-S) centers, to quinones in the respiratory chain. The immediate electron acceptor for the enzyme in this species is believed to be ubiquinone. Couples the redox reaction to proton translocation (for every two electrons transferred, four hydrogen ions are translocated across the cytoplasmic membrane), and thus conserves the redox energy in a proton gradient. The sequence is that of NADH-quinone oxidoreductase subunit C/D from Salmonella dublin (strain CT_02021853).